The following is a 194-amino-acid chain: Probable GTP-binding protein EngB (194 aa).

In terms of domain architecture, EngB-type G spans 22–194; the sequence is PLPEVALAGR…AWKAILHAIS (173 aa). Residues 30 to 37, 57 to 61, 75 to 78, 142 to 145, and 174 to 176 each bind GTP; these read GRSNVGKS, GKTQT, DVPG, TKCD, and FSS. 2 residues coordinate Mg(2+): S37 and T59.

It belongs to the TRAFAC class TrmE-Era-EngA-EngB-Septin-like GTPase superfamily. EngB GTPase family. Requires Mg(2+) as cofactor.

Necessary for normal cell division and for the maintenance of normal septation. This chain is Probable GTP-binding protein EngB, found in Halalkalibacterium halodurans (strain ATCC BAA-125 / DSM 18197 / FERM 7344 / JCM 9153 / C-125) (Bacillus halodurans).